The sequence spans 346 residues: Phosphate acyltransferase (346 aa).

It belongs to the PlsX family. As to quaternary structure, homodimer. Probably interacts with PlsY.

The protein resides in the cytoplasm. It carries out the reaction a fatty acyl-[ACP] + phosphate = an acyl phosphate + holo-[ACP]. The protein operates within lipid metabolism; phospholipid metabolism. Its function is as follows. Catalyzes the reversible formation of acyl-phosphate (acyl-PO(4)) from acyl-[acyl-carrier-protein] (acyl-ACP). This enzyme utilizes acyl-ACP as fatty acyl donor, but not acyl-CoA. The polypeptide is Phosphate acyltransferase (Brucella suis biovar 1 (strain 1330)).